The sequence spans 43 residues: Metallothionein A (43 aa).

The beta stretch occupies residues 1-16 (SCAGSCKCKNCRCRSC). Positions 2, 6, 8, 11, 13, 16, 20, 21, 23, 24, 28, 31, 35, and 37 each coordinate a divalent metal cation. The segment at 17–43 (RKSCCSCCPAGCNNCAKGCVCKEPASS) is alpha.

Belongs to the metallothionein superfamily. Type 1 family.

Functionally, metallothioneins have a high content of cysteine residues that bind various heavy metals. This is Metallothionein A from Colinus virginianus (Northern bobwhite).